We begin with the raw amino-acid sequence, 444 residues long: Exodeoxyribonuclease 7 large subunit (444 aa).

The protein belongs to the XseA family. Heterooligomer composed of large and small subunits.

The protein resides in the cytoplasm. It catalyses the reaction Exonucleolytic cleavage in either 5'- to 3'- or 3'- to 5'-direction to yield nucleoside 5'-phosphates.. Bidirectionally degrades single-stranded DNA into large acid-insoluble oligonucleotides, which are then degraded further into small acid-soluble oligonucleotides. The chain is Exodeoxyribonuclease 7 large subunit from Xylella fastidiosa (strain 9a5c).